The primary structure comprises 209 residues: Thiamine-phosphate synthase (209 aa).

Residues 39–43 (QLREK) and Asn71 each bind 4-amino-2-methyl-5-(diphosphooxymethyl)pyrimidine. Mg(2+) is bound by residues Asp72 and Asp91. Residue Ser110 participates in 4-amino-2-methyl-5-(diphosphooxymethyl)pyrimidine binding. 136-138 (TGT) provides a ligand contact to 2-[(2R,5Z)-2-carboxy-4-methylthiazol-5(2H)-ylidene]ethyl phosphate. Lys139 serves as a coordination point for 4-amino-2-methyl-5-(diphosphooxymethyl)pyrimidine. 2-[(2R,5Z)-2-carboxy-4-methylthiazol-5(2H)-ylidene]ethyl phosphate is bound by residues Gly166 and 186–187 (VS).

It belongs to the thiamine-phosphate synthase family. It depends on Mg(2+) as a cofactor.

The catalysed reaction is 2-[(2R,5Z)-2-carboxy-4-methylthiazol-5(2H)-ylidene]ethyl phosphate + 4-amino-2-methyl-5-(diphosphooxymethyl)pyrimidine + 2 H(+) = thiamine phosphate + CO2 + diphosphate. The enzyme catalyses 2-(2-carboxy-4-methylthiazol-5-yl)ethyl phosphate + 4-amino-2-methyl-5-(diphosphooxymethyl)pyrimidine + 2 H(+) = thiamine phosphate + CO2 + diphosphate. It carries out the reaction 4-methyl-5-(2-phosphooxyethyl)-thiazole + 4-amino-2-methyl-5-(diphosphooxymethyl)pyrimidine + H(+) = thiamine phosphate + diphosphate. It functions in the pathway cofactor biosynthesis; thiamine diphosphate biosynthesis; thiamine phosphate from 4-amino-2-methyl-5-diphosphomethylpyrimidine and 4-methyl-5-(2-phosphoethyl)-thiazole: step 1/1. Functionally, condenses 4-methyl-5-(beta-hydroxyethyl)thiazole monophosphate (THZ-P) and 2-methyl-4-amino-5-hydroxymethyl pyrimidine pyrophosphate (HMP-PP) to form thiamine monophosphate (TMP). This Clostridium beijerinckii (strain ATCC 51743 / NCIMB 8052) (Clostridium acetobutylicum) protein is Thiamine-phosphate synthase.